Consider the following 122-residue polypeptide: MFSLKVESEEGFCKIRLFPEHPEFSVGGYGRDDILVFKGAPVSLSAIQKMLEREFGDVIVNFRENSIEIEMQRMDCSLVIEDVASAIKEMMESAAKDLDKIEEVIKESLEKYLRRVGGDNGN.

The stretch at 79–114 forms a coiled coil; that stretch reads VIEDVASAIKEMMESAAKDLDKIEEVIKESLEKYLR.

This is an uncharacterized protein from Archaeoglobus fulgidus (strain ATCC 49558 / DSM 4304 / JCM 9628 / NBRC 100126 / VC-16).